Reading from the N-terminus, the 163-residue chain is Probable metallophosphoesterase MG207 (163 aa).

Positions 9, 11, 34, 53, 75, 107, and 109 each coordinate Mn(2+).

This sequence belongs to the metallophosphoesterase superfamily. YfcE family. Mn(2+) serves as cofactor.

This is Probable metallophosphoesterase MG207 from Mycoplasma genitalium (strain ATCC 33530 / DSM 19775 / NCTC 10195 / G37) (Mycoplasmoides genitalium).